The primary structure comprises 530 residues: Alpha-(1,3)-fucosyltransferase 4 (530 aa).

Disordered regions lie at residues 1–48 and 66–112; these read MRRL…RAVP and HLGG…STPA. The Cytoplasmic segment spans residues 1 to 147; that stretch reads MRRLWGAARK…GGRRGWRRGR (147 aa). Over residues 88-106 the composition is skewed to basic and acidic residues; it reads ASGERQRRLEPQLQHESRC. The helical; Signal-anchor for type II membrane protein transmembrane segment at 148 to 172 threads the bilayer; sequence GLPWTVCVLAAAGLTCTALITYACW. The Lumenal segment spans residues 173–530; that stretch reads GQLPPLPWAS…IRNLASWFER (358 aa). N-linked (GlcNAc...) asparagine glycosylation is found at Asn216 and Asn315.

The protein belongs to the glycosyltransferase 10 family. In terms of tissue distribution, expressed at low levels in bone marrow-derived mesenchymal stem cells. Expressed in cord blood immature promyelocytes and in peripheral blood myeloid and lymphoid cell populations.

Its subcellular location is the golgi apparatus. The protein resides in the golgi stack membrane. It catalyses the reaction a beta-D-galactosyl-(1-&gt;4)-N-acetyl-beta-D-glucosaminyl derivative + GDP-beta-L-fucose = a beta-D-galactosyl-(1-&gt;4)-[alpha-L-fucosyl-(1-&gt;3)]-N-acetyl-beta-D-glucosaminyl derivative + GDP + H(+). It carries out the reaction an N-acetyl-alpha-neuraminyl-(2-&gt;3)-beta-D-galactosyl-(1-&gt;4)-N-acetyl-beta-D-glucosaminyl derivative + GDP-beta-L-fucose = an alpha-Neu5Ac-(2-&gt;3)-beta-D-Gal-(1-&gt;4)-[alpha-L-Fuc-(1-&gt;3)]-beta-D-GlcNAc derivative + GDP + H(+). The enzyme catalyses an alpha-Neu5Ac-(2-&gt;3)-beta-D-Gal-(1-&gt;4)-beta-D-GlcNAc-(1-&gt;3)-beta-D-Gal-(1-&gt;4)-beta-D-GlcNAc derivative + GDP-beta-L-fucose = an alpha-Neu5Ac-(2-&gt;3)-beta-D-Gal-(1-&gt;4)-beta-D-GlcNAc-(1-&gt;3)-beta-D-Gal-(1-&gt;4)-[alpha-L-Fuc-(1-&gt;3)]-beta-D-GlcNAc derivative + GDP + H(+). The catalysed reaction is an alpha-Neu5Ac-(2-&gt;3)-beta-D-Gal-(1-&gt;4)-beta-D-GlcNAc6S derivative + GDP-beta-L-fucose = an alpha-Neu5Ac-(2-&gt;3)-beta-D-Gal-(1-&gt;4)-[alpha-L-Fuc-(1-&gt;3)]-beta-D-GlcNAc6S derivative + GDP + H(+). It functions in the pathway protein modification; protein glycosylation. Its function is as follows. Catalyzes alpha(1-&gt;3) linkage of fucosyl moiety transferred from GDP-beta-L-fucose to N-acetyl glucosamine (GlcNAc) within type 2 lactosamine (LacNAc, Gal-beta(1-&gt;4)GlcNAc) glycan attached to N- or O-linked glycoproteins. Robustly fucosylates nonsialylated distal LacNAc unit of the polylactosamine chain to form Lewis X antigen (CD15), a glycan determinant known to mediate important cellular functions in development and immunity. Fucosylates with lower efficiency sialylated LacNAc acceptors to form sialyl Lewis X and 6-sulfo sialyl Lewis X determinants that serve as recognition epitopes for C-type lectins. Together with FUT7 contributes to SELE, SELL and SELP selectin ligand biosynthesis and selectin-dependent lymphocyte homing, leukocyte migration and blood leukocyte homeostasis. In a cell type specific manner, may also fucosylate the internal LacNAc unit of the polylactosamine chain to form VIM-2 antigen that serves as recognition epitope for SELE. In terms of biological role, does not generate Lewis X antigens. The sequence is that of Alpha-(1,3)-fucosyltransferase 4 from Homo sapiens (Human).